Consider the following 310-residue polypeptide: Carbamate kinase (310 aa).

Belongs to the carbamate kinase family. In terms of assembly, homodimer.

It localises to the cytoplasm. The catalysed reaction is hydrogencarbonate + NH4(+) + ATP = carbamoyl phosphate + ADP + H2O + H(+). The protein operates within amino-acid degradation; L-arginine degradation via ADI pathway. This Haemophilus influenzae (strain ATCC 51907 / DSM 11121 / KW20 / Rd) protein is Carbamate kinase.